Here is a 445-residue protein sequence, read N- to C-terminus: UPF0210 protein SUB1511 (445 aa).

The protein belongs to the UPF0210 family. As to quaternary structure, homodimer.

The chain is UPF0210 protein SUB1511 from Streptococcus uberis (strain ATCC BAA-854 / 0140J).